We begin with the raw amino-acid sequence, 93 residues long: Small ribosomal subunit protein uS19 (93 aa).

It belongs to the universal ribosomal protein uS19 family.

Functionally, protein S19 forms a complex with S13 that binds strongly to the 16S ribosomal RNA. This is Small ribosomal subunit protein uS19 from Alkaliphilus metalliredigens (strain QYMF).